Here is a 128-residue protein sequence, read N- to C-terminus: Sulfurtransferase TusD (128 aa).

Cysteine 78 acts as the Cysteine persulfide intermediate in catalysis.

It belongs to the DsrE/TusD family. As to quaternary structure, heterohexamer, formed by a dimer of trimers. The hexameric TusBCD complex contains 2 copies each of TusB, TusC and TusD. The TusBCD complex interacts with TusE.

The protein localises to the cytoplasm. Its function is as follows. Part of a sulfur-relay system required for 2-thiolation of 5-methylaminomethyl-2-thiouridine (mnm(5)s(2)U) at tRNA wobble positions. Accepts sulfur from TusA and transfers it in turn to TusE. This chain is Sulfurtransferase TusD, found in Salmonella typhi.